Consider the following 495-residue polypeptide: Protein SLENDER RICE1-LIKE 1 (495 aa).

The GRAS domain maps to 77 to 449; it reads EEEEVAGIRL…RPLFSASAWE (373 aa). Residues 84-140 form a leucine repeat I (LRI) region; that stretch reads IRLVHLLMSCAGAIEAGDHALASAQLADSHAALAAVSAASGIGRVAVHFTTALSRRL. The interval 158-223 is VHIID; it reads YHHFYEACPY…GGPPFLRITG (66 aa). Positions 189–193 match the VHIID motif; that stretch reads VHVID. Residues 237–269 form a leucine repeat II (LRII) region; the sequence is DVGLRLADLARSVRVRFSFRGVAANSLDEVRPW. The interval 279-371 is PFYRE; it reads VAFNSVLQLH…EAYLQREICD (93 aa). The LXXLL motif signature appears at 287 to 291; that stretch reads LHRLL. Positions 374–449 are SAW; sequence CGEGAARRER…RPLFSASAWE (76 aa). Residues 451-495 are disordered; the sequence is AGDGGGDNNNNSNSNVSGSSGSDSNNSGSSNGKSSGARDGSSVCL. Residues 458-485 are compositionally biased toward low complexity; that stretch reads NNNNSNSNVSGSSGSDSNNSGSSNGKSS.

This sequence belongs to the GRAS family. As to expression, expressed in elongating internodes and flowers. Expressed in floral meristem, stamen primordia and tapetum in developing anthers. Expressed at low levels in roots, shoot apices and rachis.

The protein resides in the nucleus. In terms of biological role, probable transcriptional regulator that acts as a repressor of the gibberellin (GA) signaling pathway. Its repressive activity is weaker than that of SLR1. Its overexpression prevents the GA signaling pathway and induces a dwarf phenotype. This is Protein SLENDER RICE1-LIKE 1 from Oryza sativa subsp. japonica (Rice).